The sequence spans 149 residues: 3-hydroxyacyl-[acyl-carrier-protein] dehydratase FabZ (149 aa).

Histidine 52 is a catalytic residue.

Belongs to the thioester dehydratase family. FabZ subfamily.

It localises to the cytoplasm. The enzyme catalyses a (3R)-hydroxyacyl-[ACP] = a (2E)-enoyl-[ACP] + H2O. Involved in unsaturated fatty acids biosynthesis. Catalyzes the dehydration of short chain beta-hydroxyacyl-ACPs and long chain saturated and unsaturated beta-hydroxyacyl-ACPs. This is 3-hydroxyacyl-[acyl-carrier-protein] dehydratase FabZ from Cupriavidus necator (strain ATCC 17699 / DSM 428 / KCTC 22496 / NCIMB 10442 / H16 / Stanier 337) (Ralstonia eutropha).